A 586-amino-acid polypeptide reads, in one-letter code: Phosphomethylpyrimidine synthase (586 aa).

The segment at 1–58 is disordered; that stretch reads MKQSVSAEQIELKSSLPGSKKVYVDGTREGMKVPMREIEQSDTNGVQNPPIRVYDTSG. The segment covering 22–39 has biased composition (basic and acidic residues); that stretch reads VYVDGTREGMKVPMREIE. Substrate-binding positions include Asn-193, Met-222, Tyr-251, His-287, 307–309, 348–351, and Glu-387; these read SRG and DGLR. A Zn(2+)-binding site is contributed by His-391. Tyr-414 contacts substrate. Residue His-455 coordinates Zn(2+). [4Fe-4S] cluster contacts are provided by Cys-535, Cys-538, and Cys-543.

It belongs to the ThiC family. [4Fe-4S] cluster is required as a cofactor.

The catalysed reaction is 5-amino-1-(5-phospho-beta-D-ribosyl)imidazole + S-adenosyl-L-methionine = 4-amino-2-methyl-5-(phosphooxymethyl)pyrimidine + CO + 5'-deoxyadenosine + formate + L-methionine + 3 H(+). The protein operates within cofactor biosynthesis; thiamine diphosphate biosynthesis. Its function is as follows. Catalyzes the synthesis of the hydroxymethylpyrimidine phosphate (HMP-P) moiety of thiamine from aminoimidazole ribotide (AIR) in a radical S-adenosyl-L-methionine (SAM)-dependent reaction. The polypeptide is Phosphomethylpyrimidine synthase (Bacillus mycoides (strain KBAB4) (Bacillus weihenstephanensis)).